We begin with the raw amino-acid sequence, 357 residues long: Probable cinnamyl alcohol dehydrogenase (357 aa).

A Zn(2+)-binding site is contributed by Cys47. Ser49 is a binding site for NADP(+). The Zn(2+) site is built by His69, Glu70, Cys100, Cys103, Cys106, Cys114, and Cys163. NADP(+) is bound by residues Thr167, Gly188–Gly193, Ser211–Lys216, Thr251, Gly275, and Ser298–Ile300.

It belongs to the zinc-containing alcohol dehydrogenase family. Homodimer. It depends on Zn(2+) as a cofactor.

It carries out the reaction (E)-cinnamyl alcohol + NADP(+) = (E)-cinnamaldehyde + NADPH + H(+). It catalyses the reaction (E)-coniferol + NADP(+) = (E)-coniferaldehyde + NADPH + H(+). The enzyme catalyses (E)-sinapyl alcohol + NADP(+) = (E)-sinapaldehyde + NADPH + H(+). The catalysed reaction is (E)-4-coumaroyl alcohol + NADP(+) = (E)-4-coumaraldehyde + NADPH + H(+). It carries out the reaction (E)-caffeyl alcohol + NADP(+) = (E)-caffeyl aldehyde + NADPH + H(+). It participates in aromatic compound metabolism; phenylpropanoid biosynthesis. Functionally, involved in lignin biosynthesis. Catalyzes the final step specific for the production of lignin monomers. Catalyzes the NADPH-dependent reduction of coniferaldehyde, 5-hydroxyconiferaldehyde, sinapaldehyde, 4-coumaraldehyde and caffeyl aldehyde to their respective alcohols. This Pinus taeda (Loblolly pine) protein is Probable cinnamyl alcohol dehydrogenase.